A 594-amino-acid chain; its full sequence is Segmentation polarity homeobox protein engrailed (594 aa).

Disordered regions lie at residues Met-1–Glu-64, Ile-76–Ile-127, Lys-141–Gly-164, His-198–Ala-217, Ile-231–Ser-299, Ala-387–Asn-458, and Asp-474–Thr-501. Positions Ser-22–Pro-60 are enriched in low complexity. The span at Pro-92–His-112 shows a compositional bias: basic residues. Residues His-151–Gly-164 are compositionally biased toward pro residues. Over residues Leu-237–Thr-247 the composition is skewed to polar residues. Low complexity-rich tracts occupy residues Ala-278–Ser-299 and Ala-387–Ala-402. Polar residues-rich tracts occupy residues Ser-426–Asp-436 and Glu-448–Asn-458. Over residues Gln-487–Pro-499 the composition is skewed to basic and acidic residues. The homeobox DNA-binding region spans Glu-496–Ser-555.

This sequence belongs to the engrailed homeobox family.

It localises to the nucleus. This protein specifies the body segmentation pattern. It is required for the development of the central nervous system. Transcriptional regulator that repress activated promoters. This is Segmentation polarity homeobox protein engrailed (en) from Anopheles gambiae (African malaria mosquito).